A 121-amino-acid polypeptide reads, in one-letter code: Flagellar hook-basal body complex protein FliE (121 aa).

Belongs to the FliE family.

The protein resides in the bacterial flagellum basal body. In Treponema denticola (strain ATCC 35405 / DSM 14222 / CIP 103919 / JCM 8153 / KCTC 15104), this protein is Flagellar hook-basal body complex protein FliE.